Consider the following 508-residue polypeptide: Kinesin light chain 3 (508 aa).

Residues 1–20 (MSVQVAAPGSTGLGPERLNP) are disordered. Residues 88–150 (LLALSAHVSV…EEEKSHLQFL (63 aa)) are a coiled coil. Positions 154–197 (RQYDPPEESQRPESPPRRDSLASLFPSEEEEKKGPEAAGAAAAQ) are disordered. Positions 161–173 (ESQRPESPPRRDS) are enriched in basic and acidic residues. Serine 173 is subject to Phosphoserine. 5 TPR repeats span residues 207–240 (LRTL…LERS), 249–282 (ATML…REQT), 291–324 (AATL…REKV), 333–366 (AKQL…YEAL), and 375–408 (AKTK…EALP). Positions 409 to 441 (APLGAPQGGTAGDTQQQVLRRSSSFSKLRESIR) are disordered. Residues 420-434 (GDTQQQVLRRSSSFS) show a composition bias toward polar residues. A Phosphoserine modification is found at serine 467. The disordered stretch occupies residues 486 to 508 (LSTRHLSEAPRTLSISTQDLSPR). The segment covering 498-508 (LSISTQDLSPR) has biased composition (polar residues). At threonine 502 the chain carries Phosphothreonine. Serine 506 is subject to Phosphoserine.

Belongs to the kinesin light chain family. Oligomer composed of two heavy chains and two light chains. Associates with microtubulin in an ATP-dependent manner. Interacts with KIF5C. Interacts with ODF1. Interacts with LRGUK. Interacts with VDAC2. Expressed in postmeiotic male germ cells (at protein level). Expressed in the testes (at protein level). Expressed in spleen, intestine, brain and ovary.

It localises to the cytoplasm. The protein localises to the cytoskeleton. The protein resides in the mitochondrion. In terms of biological role, kinesin is a microtubule-associated force-producing protein that may play a role in organelle transport. Plays a role during spermiogenesis in the development of the sperm tail midpiece and in the normal function of spermatozoa. May play a role in the formation of the mitochondrial sheath formation in the developing spermatid midpiece. The polypeptide is Kinesin light chain 3 (Klc3) (Mus musculus (Mouse)).